Reading from the N-terminus, the 275-residue chain is Hydroxyethylthiazole kinase (275 aa).

Met50 contacts substrate. ATP contacts are provided by Arg126 and Ser171. Position 200 (Ala200) interacts with substrate.

Belongs to the Thz kinase family. Mg(2+) serves as cofactor.

It carries out the reaction 5-(2-hydroxyethyl)-4-methylthiazole + ATP = 4-methyl-5-(2-phosphooxyethyl)-thiazole + ADP + H(+). It participates in cofactor biosynthesis; thiamine diphosphate biosynthesis; 4-methyl-5-(2-phosphoethyl)-thiazole from 5-(2-hydroxyethyl)-4-methylthiazole: step 1/1. Catalyzes the phosphorylation of the hydroxyl group of 4-methyl-5-beta-hydroxyethylthiazole (THZ). In Acinetobacter baumannii (strain AB307-0294), this protein is Hydroxyethylthiazole kinase.